The sequence spans 399 residues: Leu/Ile/Val-binding protein homolog 7 (399 aa).

The first 22 residues, 1-22, serve as a signal peptide directing secretion; that stretch reads MEKHLIALSVAALLAGAAPASA.

Belongs to the leucine-binding protein family.

Its function is as follows. Component of an amino-acid transport system. This Brucella suis biovar 1 (strain 1330) protein is Leu/Ile/Val-binding protein homolog 7.